We begin with the raw amino-acid sequence, 97 residues long: UPF0213 protein BLi00048/BL00536 (97 aa).

Positions 4 to 79 (NSHYFYVLSC…KKLSRKNKER (76 aa)) constitute a GIY-YIG domain.

Belongs to the UPF0213 family.

The sequence is that of UPF0213 protein BLi00048/BL00536 from Bacillus licheniformis (strain ATCC 14580 / DSM 13 / JCM 2505 / CCUG 7422 / NBRC 12200 / NCIMB 9375 / NCTC 10341 / NRRL NRS-1264 / Gibson 46).